A 362-amino-acid polypeptide reads, in one-letter code: GTPase Obg (362 aa).

The Obg domain maps to 1-159 (MKFLDEAKVY…KTIWLRLKLI (159 aa)). In terms of domain architecture, OBG-type G spans 160-327 (ADAGLVGLPN…VLRALRDVIV (168 aa)). Residues 166 to 173 (GLPNAGKS), 191 to 195 (FTTLH), 212 to 215 (DIPG), 279 to 282 (SQID), and 308 to 310 (SAV) each bind GTP. Mg(2+) is bound by residues Ser-173 and Thr-193. The segment at 332–362 (EEKPAKVPKLRHRDMIVSDEGEGEDGADDQP) is disordered. Acidic residues predominate over residues 348–362 (VSDEGEGEDGADDQP).

Belongs to the TRAFAC class OBG-HflX-like GTPase superfamily. OBG GTPase family. Monomer. Requires Mg(2+) as cofactor.

The protein localises to the cytoplasm. Functionally, an essential GTPase which binds GTP, GDP and possibly (p)ppGpp with moderate affinity, with high nucleotide exchange rates and a fairly low GTP hydrolysis rate. Plays a role in control of the cell cycle, stress response, ribosome biogenesis and in those bacteria that undergo differentiation, in morphogenesis control. This chain is GTPase Obg, found in Rhizobium etli (strain CIAT 652).